Here is a 429-residue protein sequence, read N- to C-terminus: Enolase (429 aa).

Gln-165 provides a ligand contact to (2R)-2-phosphoglycerate. The active-site Proton donor is Glu-207. The Mg(2+) site is built by Asp-244, Glu-287, and Asp-314. (2R)-2-phosphoglycerate contacts are provided by Lys-339, Arg-368, Ser-369, and Lys-390. Residue Lys-339 is the Proton acceptor of the active site.

Belongs to the enolase family. It depends on Mg(2+) as a cofactor.

It localises to the cytoplasm. The protein resides in the secreted. It is found in the cell surface. The catalysed reaction is (2R)-2-phosphoglycerate = phosphoenolpyruvate + H2O. It participates in carbohydrate degradation; glycolysis; pyruvate from D-glyceraldehyde 3-phosphate: step 4/5. Catalyzes the reversible conversion of 2-phosphoglycerate (2-PG) into phosphoenolpyruvate (PEP). It is essential for the degradation of carbohydrates via glycolysis. In Roseiflexus castenholzii (strain DSM 13941 / HLO8), this protein is Enolase.